Here is a 230-residue protein sequence, read N- to C-terminus: Ropporin-1-like protein (230 aa).

Residues 17–46 (PELPDILKQFTKAAIRTQPADVLRWSAGYF) enclose the RIIa domain.

Belongs to the ropporin family. Component of the axonemal radial spoke complex 1 (RS1), at least composed of spoke head proteins RSPH1, RSPH3, RSPH9 and the cilia-specific component RSPH4A or sperm-specific component RSPH6A, spoke stalk proteins RSPH14, DNAJB13, DYDC1, ROPN1L and NME5, and the anchor protein IQUB. Interacts with FSCB; the interaction increases upon spermatozoa capacitation conditions. May interact with AKAP3. Interacts with CFAP61. Post-translationally, sumoylated, sumoylation decreases upon spermatozoa capacitation conditions.

The protein localises to the cell projection. Its subcellular location is the cilium. It is found in the flagellum. Its function is as follows. Functions as part of axonemal radial spoke complexes that play an important part in the motility of sperm and cilia. Important for male fertility. With ROPN1, involved in fibrous sheath integrity and sperm motility, plays a role in PKA-dependent signaling processes required for spermatozoa capacitation. The chain is Ropporin-1-like protein (ROPN1L) from Homo sapiens (Human).